The primary structure comprises 475 residues: MSLTIAIVGRPNVGKSTLFNRLVGQKLALVDDKPGVTRDRRVHAATLQDLRFDVIDTAGLEETGDHTLEGRMRAHTKAAIDEADLILFVFDAKSGITPSDLNFASLVRKSGKPIVLVANKSESKAAIGGEYEAWSLGLGEPCSISAEHGLGLSDLRDAIMKASGGERIFASKNQEEHIALQSASLDDYIDNLEEKGDVYDKSKPLRIAVAGRPNTGKSTLINRMLGQDRLLTGPEAGLTRDSISVDWEWRGRHIKLFDTAGLRRKSKIQEKLEKLSVADTLRAIRFAEVVVIVFDATTPFEKQDLQIADLVIREGRVPLIAFNKWDLIENSQATLVDLHEKCIRLLPQVRGLRAVPLSGQYGQGIDKLMENVMMMHRVWNRRISTGKLNRWLETIVAHHPPPAVLGRRLKVKYVTQVKTRPPGFVFSCSRPKLMPQSYLRYLSNELRNTFDMPGIPIRISLRASDNPFATRSKKK.

EngA-type G domains lie at 3 to 167 and 205 to 380; these read LTIA…GGER and LRIA…RVWN. GTP is bound by residues 9-16, 56-60, 119-122, 211-218, 258-262, and 323-326; these read GRPNVGKS, DTAGL, NKSE, GRPNTGKS, and NKWD. Residues 381–465 form the KH-like domain; the sequence is RRISTGKLNR…PIRISLRASD (85 aa).

The protein belongs to the TRAFAC class TrmE-Era-EngA-EngB-Septin-like GTPase superfamily. EngA (Der) GTPase family. As to quaternary structure, associates with the 50S ribosomal subunit.

Functionally, GTPase that plays an essential role in the late steps of ribosome biogenesis. This Bartonella henselae (strain ATCC 49882 / DSM 28221 / CCUG 30454 / Houston 1) (Rochalimaea henselae) protein is GTPase Der.